The following is a 320-amino-acid chain: Cytochrome f (320 aa).

An N-terminal signal peptide occupies residues 1–35 (MQTRNTLSWIREEITRSISVSLMIYIITWASISSA). Residues Tyr36, Cys56, Cys59, and His60 each contribute to the heme site. Residues 286-306 (VQGLLFFLGSVVLAQIFLVLK) traverse the membrane as a helical segment.

This sequence belongs to the cytochrome f family. In terms of assembly, the 4 large subunits of the cytochrome b6-f complex are cytochrome b6, subunit IV (17 kDa polypeptide, petD), cytochrome f and the Rieske protein, while the 4 small subunits are PetG, PetL, PetM and PetN. The complex functions as a dimer. Requires heme as cofactor.

The protein localises to the plastid. The protein resides in the chloroplast thylakoid membrane. Component of the cytochrome b6-f complex, which mediates electron transfer between photosystem II (PSII) and photosystem I (PSI), cyclic electron flow around PSI, and state transitions. The chain is Cytochrome f from Olimarabidopsis pumila (Dwarf rocket).